The chain runs to 310 residues: U-megalopygitoxin(8)-Mo15 (310 aa).

Residues 1 to 27 (MARFSSKNLTKLFQYLVLSLLSPVAFG) form the signal peptide.

The protein belongs to the megalysin family. Contains 3 disulfide bonds. As to expression, expressed by the venom apparatus.

The protein resides in the secreted. Its subcellular location is the target cell membrane. May function as a large pore-forming protein. This is U-megalopygitoxin(8)-Mo15 from Megalopyge opercularis (Southern flannel moth).